Here is a 97-residue protein sequence, read N- to C-terminus: Class II hydrophobin A (97 aa).

Residues 1–15 (MKSVVFASLIASALA) form the signal peptide. Intrachain disulfides connect C30–C79, C40–C53, and C80–C91.

The protein belongs to the cerato-ulmin hydrophobin family.

It localises to the secreted. The protein localises to the cell wall. It is found in the vacuole. Its subcellular location is the cytoplasmic vesicle. Functionally, aerial growth, conidiation, and dispersal of filamentous fungi in the environment rely upon a capability of their secreting small amphipathic proteins called hydrophobins (HPBs) with low sequence identity. Class I can self-assemble into an outermost layer of rodlet bundles on aerial cell surfaces, conferring cellular hydrophobicity that supports fungal growth, development and dispersal; whereas Class II form highly ordered films at water-air interfaces through intermolecular interactions but contribute nothing to the rodlet structure. Hyd2A contributes to certain cell wall-related features, such as hydrophobicity but is not involved in cell wall-related events during fungal proliferation in host hemocoel. Does not contribute to conidial hydrophobicity. Involved in insect hemocoel colonization independent of cell hydrophobicity, as well as in the asexual development. In Beauveria bassiana (strain ARSEF 2860) (White muscardine disease fungus), this protein is Class II hydrophobin A.